The chain runs to 94 residues: MITYHDAFAKANHYLDDADLPVVITLHGRFSQGWYFCFEAREFLETGDEAARLAGNAPFIIDKDSGEIHSLGTAKPLEEYLQDYEIKKATFGLP.

This is an uncharacterized protein from Escherichia coli (strain K12).